Here is a 365-residue protein sequence, read N- to C-terminus: MTDSQQSKPKHVMMMAAGTGGHVFPALAVAKQLQQQGCQVSWLATPTGMENRLLKDQNIPIYQIDIQGVRGNGVIRKLAAPFKILKATFSAMRYMKQLKVDAVAGFGGYVAGPGGLAARLLGIPVLIHEQNAVAGFTNAQLSRVAKVVCEAFPNTFPASEKVVTTGNPVRREITDILSPKWRYDEREQAGKLLNILIVGGSLGAKALNERLPPALKQLEVPLNIFHQCGQQQVEATQALYADAPANLTVQVLPFIEDMAKAYSEADLIICRAGALTVTEVATAGVAAVFVPLPIAVDDHQTANAKFLADVGAAKICQQSTMTPEVLNQLFTTLMNRQLLTEMAVKARQHAQPNATQHVVDLIQKM.

UDP-N-acetyl-alpha-D-glucosamine contacts are provided by residues 19 to 21 (TGG), N131, R170, S201, I255, 274 to 279 (ALTVTE), and Q300.

Belongs to the glycosyltransferase 28 family. MurG subfamily.

The protein resides in the cell inner membrane. It catalyses the reaction di-trans,octa-cis-undecaprenyl diphospho-N-acetyl-alpha-D-muramoyl-L-alanyl-D-glutamyl-meso-2,6-diaminopimeloyl-D-alanyl-D-alanine + UDP-N-acetyl-alpha-D-glucosamine = di-trans,octa-cis-undecaprenyl diphospho-[N-acetyl-alpha-D-glucosaminyl-(1-&gt;4)]-N-acetyl-alpha-D-muramoyl-L-alanyl-D-glutamyl-meso-2,6-diaminopimeloyl-D-alanyl-D-alanine + UDP + H(+). It functions in the pathway cell wall biogenesis; peptidoglycan biosynthesis. In terms of biological role, cell wall formation. Catalyzes the transfer of a GlcNAc subunit on undecaprenyl-pyrophosphoryl-MurNAc-pentapeptide (lipid intermediate I) to form undecaprenyl-pyrophosphoryl-MurNAc-(pentapeptide)GlcNAc (lipid intermediate II). This Acinetobacter baumannii (strain ACICU) protein is UDP-N-acetylglucosamine--N-acetylmuramyl-(pentapeptide) pyrophosphoryl-undecaprenol N-acetylglucosamine transferase.